A 117-amino-acid chain; its full sequence is Large ribosomal subunit protein bL20 (117 aa).

It belongs to the bacterial ribosomal protein bL20 family.

Its function is as follows. Binds directly to 23S ribosomal RNA and is necessary for the in vitro assembly process of the 50S ribosomal subunit. It is not involved in the protein synthesizing functions of that subunit. The sequence is that of Large ribosomal subunit protein bL20 from Vibrio metschnikovii.